The primary structure comprises 408 residues: Sex comb on midleg-like protein 4 (408 aa).

S55 and S65 each carry phosphoserine. The disordered stretch occupies residues 274–338; sequence AGGPATTTSG…TRRPSSRNPS (65 aa). Residues 278-287 are compositionally biased toward polar residues; the sequence is ATTTSGSRTN. Over residues 288 to 306 the composition is skewed to low complexity; sequence PVPSGGSSSPGLRLPASSP. Residues 340–406 enclose the SAM domain; it reads WTVEDVVRFV…CYHIDKLKQA (67 aa).

It belongs to the SCM family.

The protein localises to the nucleus. In terms of biological role, putative Polycomb group (PcG) protein. PcG proteins act by forming multiprotein complexes, which are required to maintain the transcriptionally repressive state of homeotic genes throughout development. The polypeptide is Sex comb on midleg-like protein 4 (Scml4) (Mus musculus (Mouse)).